The primary structure comprises 296 residues: Ribose import binding protein RbsB (296 aa).

Residues 1 to 25 (MNMKKLATLVSAVALSATVSANAMA) form the signal peptide.

It belongs to the bacterial solute-binding protein 2 family. As to quaternary structure, the complex is composed of an ATP-binding protein (RbsA), two transmembrane proteins (RbsC) and a solute-binding protein (RbsB).

It is found in the periplasm. In terms of biological role, part of the ABC transporter complex RbsABC involved in ribose import. Binds ribose. In Salmonella typhi, this protein is Ribose import binding protein RbsB (rbsB).